A 174-amino-acid polypeptide reads, in one-letter code: Gamma-crystallin D (174 aa).

2 Beta/gamma crystallin 'Greek key' domains span residues 2–40 and 41–83; these read GKIT…RVDS and GCWM…RLIP. A connecting peptide region spans residues 84–87; that stretch reads HSGS. Beta/gamma crystallin 'Greek key' domains follow at residues 88-128 and 129-171; these read HRIR…NVLE and GSWV…RRVI.

This sequence belongs to the beta/gamma-crystallin family. In terms of assembly, monomer.

Functionally, crystallins are the dominant structural components of the vertebrate eye lens. The sequence is that of Gamma-crystallin D (CRYGD) from Homo sapiens (Human).